A 247-amino-acid chain; its full sequence is ATP synthase subunit a, chloroplastic (247 aa).

Helical transmembrane passes span 38–58 (QVLI…TIAV), 95–115 (VPFI…GALF), 134–154 (INTT…AGLT), 199–219 (LVVV…VMFL), and 220–240 (GLFT…AYIG).

It belongs to the ATPase A chain family. F-type ATPases have 2 components, CF(1) - the catalytic core - and CF(0) - the membrane proton channel. CF(1) has five subunits: alpha(3), beta(3), gamma(1), delta(1), epsilon(1). CF(0) has four main subunits: a, b, b' and c.

The protein localises to the plastid. It is found in the chloroplast thylakoid membrane. Functionally, key component of the proton channel; it plays a direct role in the translocation of protons across the membrane. This Piper cenocladum (Ant piper) protein is ATP synthase subunit a, chloroplastic.